Here is a 295-residue protein sequence, read N- to C-terminus: Acetylglutamate kinase (295 aa).

Substrate contacts are provided by residues 66–67 (GG), arginine 88, and asparagine 193.

The protein belongs to the acetylglutamate kinase family. ArgB subfamily.

It localises to the cytoplasm. It carries out the reaction N-acetyl-L-glutamate + ATP = N-acetyl-L-glutamyl 5-phosphate + ADP. Its pathway is amino-acid biosynthesis; L-arginine biosynthesis; N(2)-acetyl-L-ornithine from L-glutamate: step 2/4. Functionally, catalyzes the ATP-dependent phosphorylation of N-acetyl-L-glutamate. The polypeptide is Acetylglutamate kinase (Bradyrhizobium diazoefficiens (strain JCM 10833 / BCRC 13528 / IAM 13628 / NBRC 14792 / USDA 110)).